The following is a 230-amino-acid chain: Ribose-5-phosphate isomerase A (230 aa).

Residues threonine 31–threonine 34, aspartate 87–aspartate 90, and lysine 100–glycine 103 contribute to the substrate site. Residue glutamate 109 is the Proton acceptor of the active site. Lysine 127 provides a ligand contact to substrate.

This sequence belongs to the ribose 5-phosphate isomerase family. In terms of assembly, homodimer.

The catalysed reaction is aldehydo-D-ribose 5-phosphate = D-ribulose 5-phosphate. Its pathway is carbohydrate degradation; pentose phosphate pathway; D-ribose 5-phosphate from D-ribulose 5-phosphate (non-oxidative stage): step 1/1. Catalyzes the reversible conversion of ribose-5-phosphate to ribulose 5-phosphate. This is Ribose-5-phosphate isomerase A from Lactobacillus delbrueckii subsp. bulgaricus (strain ATCC 11842 / DSM 20081 / BCRC 10696 / JCM 1002 / NBRC 13953 / NCIMB 11778 / NCTC 12712 / WDCM 00102 / Lb 14).